A 218-amino-acid polypeptide reads, in one-letter code: MLTIDLGSLSYAEAEAVQTARLGEVSTGGEDTLYLVEHPPVITLGRNGGIENLHAGRGFLAERGIELAQSSRGGNITCHFPGQLVAYPVFRIERRPGGLRSFFHDLEEVVLRTLHTFGLEASRHEGRPGVWIDNRKICSIGVAVRRWTTYHGLALNVGRDLSLFNLITLCGLPDAEATSLHRELDDDSVTMQEVKDVLTRQFLAIFTHPAVAAGEAAL.

Residues 27-210 (TGGEDTLYLV…QFLAIFTHPA (184 aa)) enclose the BPL/LPL catalytic domain. Residues 72-79 (RGGNITCH), 139-141 (SIG), and 152-154 (GLA) each bind substrate. Residue Cys-170 is the Acyl-thioester intermediate of the active site.

Belongs to the LipB family.

It localises to the cytoplasm. It carries out the reaction octanoyl-[ACP] + L-lysyl-[protein] = N(6)-octanoyl-L-lysyl-[protein] + holo-[ACP] + H(+). Its pathway is protein modification; protein lipoylation via endogenous pathway; protein N(6)-(lipoyl)lysine from octanoyl-[acyl-carrier-protein]: step 1/2. Functionally, catalyzes the transfer of endogenously produced octanoic acid from octanoyl-acyl-carrier-protein onto the lipoyl domains of lipoate-dependent enzymes. Lipoyl-ACP can also act as a substrate although octanoyl-ACP is likely to be the physiological substrate. This Nitratidesulfovibrio vulgaris (strain ATCC 29579 / DSM 644 / CCUG 34227 / NCIMB 8303 / VKM B-1760 / Hildenborough) (Desulfovibrio vulgaris) protein is Octanoyltransferase.